A 236-amino-acid polypeptide reads, in one-letter code: Uridylate kinase (236 aa).

Position 10–13 (10–13 (KLSG)) interacts with ATP. Gly52 lines the UMP pocket. Residues Gly53 and Arg57 each coordinate ATP. UMP is bound by residues Asp72 and 133–140 (TGNPFFTT). Residues Thr160, Tyr166, and Asp169 each contribute to the ATP site.

The protein belongs to the UMP kinase family. As to quaternary structure, homohexamer.

The protein localises to the cytoplasm. It catalyses the reaction UMP + ATP = UDP + ADP. It participates in pyrimidine metabolism; CTP biosynthesis via de novo pathway; UDP from UMP (UMPK route): step 1/1. Its activity is regulated as follows. Inhibited by UTP. In terms of biological role, catalyzes the reversible phosphorylation of UMP to UDP. The sequence is that of Uridylate kinase from Phocaeicola vulgatus (strain ATCC 8482 / DSM 1447 / JCM 5826 / CCUG 4940 / NBRC 14291 / NCTC 11154) (Bacteroides vulgatus).